Consider the following 463-residue polypeptide: MDSVNQRDRISSLPDVVLVMILSFLSFKDNVKTSILSKRWRNICYEAKNISFKESEYVDISVFDYVSKRVSFVRYMLNWVSRVPIKVIESFEICLGFPVGFEVEIKSLIEFSISRQVKKLVLDFSSPFWDNTWDGLRNDDFVIELPALIYGLQTLESLTIYACMFDPSRFTNVGLRTLSIGWFRLEKIESLLSKFPLLESLSIISCYLDEVKLAGQIRVRELIIDNCIIPTMYCLLNLPNIEIFKYSGNVIVFDFQKVNMILLKEVYLDFFIEHENDEPTYSPKEAGDILSHLLNDLRSSRTLTVCSYLLEVISECNDPVDMLRDVQAQHLVLETLMHPNEFTGMRLLLDHCPNLETLTFQLLCLKPFPVRLQYIDSHTLWLENISSRCLRRTLKILVVRGFCNSWNEFYLLNYLVLPEHGFALERVELYLPPLQEMPRQWAYHGAAMLQKTSNRVQVILHSA.

Residues 7-55 (RDRISSLPDVVLVMILSFLSFKDNVKTSILSKRWRNICYEAKNISFKES) form the F-box domain.

The sequence is that of Putative F-box protein At3g29830 from Arabidopsis thaliana (Mouse-ear cress).